The chain runs to 117 residues: Large ribosomal subunit protein bL20c (117 aa).

It belongs to the bacterial ribosomal protein bL20 family.

The protein localises to the plastid. Its function is as follows. Binds directly to 23S ribosomal RNA and is necessary for the in vitro assembly process of the 50S ribosomal subunit. It is not involved in the protein synthesizing functions of that subunit. In Euglena longa (Euglenophycean alga), this protein is Large ribosomal subunit protein bL20c (rpl20).